We begin with the raw amino-acid sequence, 241 residues long: Pyridoxine 5'-phosphate synthase (241 aa).

Position 7 (Asn7) interacts with 3-amino-2-oxopropyl phosphate. 1-deoxy-D-xylulose 5-phosphate is bound at residue Asp9–His10. A 3-amino-2-oxopropyl phosphate-binding site is contributed by Arg18. The Proton acceptor role is filled by His43. The 1-deoxy-D-xylulose 5-phosphate site is built by Arg45 and His50. The active-site Proton acceptor is the Glu70. Thr100 is a binding site for 1-deoxy-D-xylulose 5-phosphate. Catalysis depends on His191, which acts as the Proton donor. 3-amino-2-oxopropyl phosphate contacts are provided by residues Gly192 and Gly213–His214.

It belongs to the PNP synthase family. In terms of assembly, homooctamer; tetramer of dimers.

It is found in the cytoplasm. The enzyme catalyses 3-amino-2-oxopropyl phosphate + 1-deoxy-D-xylulose 5-phosphate = pyridoxine 5'-phosphate + phosphate + 2 H2O + H(+). It functions in the pathway cofactor biosynthesis; pyridoxine 5'-phosphate biosynthesis; pyridoxine 5'-phosphate from D-erythrose 4-phosphate: step 5/5. Catalyzes the complicated ring closure reaction between the two acyclic compounds 1-deoxy-D-xylulose-5-phosphate (DXP) and 3-amino-2-oxopropyl phosphate (1-amino-acetone-3-phosphate or AAP) to form pyridoxine 5'-phosphate (PNP) and inorganic phosphate. In Acidithiobacillus ferrooxidans (strain ATCC 23270 / DSM 14882 / CIP 104768 / NCIMB 8455) (Ferrobacillus ferrooxidans (strain ATCC 23270)), this protein is Pyridoxine 5'-phosphate synthase.